A 111-amino-acid polypeptide reads, in one-letter code: Anti-adapter protein IraM (111 aa).

This sequence belongs to the IraM/RssC family.

Its subcellular location is the cytoplasm. Inhibits RpoS proteolysis by regulating RssB activity, thereby increasing the stability of the sigma stress factor RpoS during magnesium starvation. This Escherichia coli O127:H6 (strain E2348/69 / EPEC) protein is Anti-adapter protein IraM.